A 124-amino-acid polypeptide reads, in one-letter code: Small ribosomal subunit protein uS12c (124 aa).

A disordered region spans residues 1–28 (MPTFQQLVRSARKPHAKKTKSPALQGCP). Over residues 10–20 (SARKPHAKKTK) the composition is skewed to basic residues.

It belongs to the universal ribosomal protein uS12 family. As to quaternary structure, part of the 30S ribosomal subunit.

It is found in the plastid. With S4 and S5 plays an important role in translational accuracy. Located at the interface of the 30S and 50S subunits. The chain is Small ribosomal subunit protein uS12c (rps12) from Prototheca wickerhamii.